We begin with the raw amino-acid sequence, 312 residues long: Glyoxylate/hydroxypyruvate reductase A (312 aa).

Arginine 227 is a catalytic residue. Histidine 275 acts as the Proton donor in catalysis.

The protein belongs to the D-isomer specific 2-hydroxyacid dehydrogenase family. GhrA subfamily.

Its subcellular location is the cytoplasm. It catalyses the reaction glycolate + NADP(+) = glyoxylate + NADPH + H(+). The enzyme catalyses (R)-glycerate + NAD(+) = 3-hydroxypyruvate + NADH + H(+). It carries out the reaction (R)-glycerate + NADP(+) = 3-hydroxypyruvate + NADPH + H(+). Its function is as follows. Catalyzes the NADPH-dependent reduction of glyoxylate and hydroxypyruvate into glycolate and glycerate, respectively. In Shigella boydii serotype 18 (strain CDC 3083-94 / BS512), this protein is Glyoxylate/hydroxypyruvate reductase A.